The sequence spans 175 residues: Protein her-1 (175 aa).

The signal sequence occupies residues 1–18 (MRYLPIFVFLGSFGYTET). Asn98 and Asn163 each carry an N-linked (GlcNAc...) asparagine glycan.

It localises to the secreted. Dictates male development. Probably plays a direct role in cell signaling during C.elegans sex determination. Inhibits the function of tra-2a. This chain is Protein her-1 (her-1), found in Caenorhabditis elegans.